We begin with the raw amino-acid sequence, 427 residues long: 3-phosphoshikimate 1-carboxyvinyltransferase (427 aa).

3-phosphoshikimate-binding residues include K20, S21, and R25. Phosphoenolpyruvate is bound at residue K20. Phosphoenolpyruvate contacts are provided by G92 and R120. Residues S166, Q168, D312, and K339 each coordinate 3-phosphoshikimate. Residue Q168 coordinates phosphoenolpyruvate. Residue D312 is the Proton acceptor of the active site. Residues R343 and R385 each coordinate phosphoenolpyruvate.

Belongs to the EPSP synthase family. In terms of assembly, monomer.

It localises to the cytoplasm. The enzyme catalyses 3-phosphoshikimate + phosphoenolpyruvate = 5-O-(1-carboxyvinyl)-3-phosphoshikimate + phosphate. It participates in metabolic intermediate biosynthesis; chorismate biosynthesis; chorismate from D-erythrose 4-phosphate and phosphoenolpyruvate: step 6/7. Functionally, catalyzes the transfer of the enolpyruvyl moiety of phosphoenolpyruvate (PEP) to the 5-hydroxyl of shikimate-3-phosphate (S3P) to produce enolpyruvyl shikimate-3-phosphate and inorganic phosphate. In Streptococcus thermophilus (strain ATCC BAA-250 / LMG 18311), this protein is 3-phosphoshikimate 1-carboxyvinyltransferase.